A 300-amino-acid chain; its full sequence is MAIAPRGRFAPTPSGDLHLGSLVAAVGSYLHVRSQCGTWLLRIDDLDAPRVVPGASDRIQTCLEAFGLHWDEVVYFQQPQQEHYQAALEQLTATGRVYRCQCSRKQLSQSGDSVSVDGSLRYPGFCRDRQLSSEIEGSDRLNVQNLPAIALEDAWQGRYQQDLAQAVGDFILRRRDRLFSYHLATVVDDARQGITEVIRGLDLLASTPRQIALQQLLNLPTPHYGHLPLVVWPNGDKLSKQTKAPPLDLRQAPALLSQAIGHLGLAMPSDLQGAPVGEQLAWAIAHFPAPRLSKQPDSLS.

Residues 8-12 (RFAPT) and aspartate 44 contribute to the L-glutamate site. Residues 11 to 21 (PTPSGDLHLGS) carry the 'HIGH' region motif. The Zn(2+) site is built by cysteine 100, cysteine 102, tyrosine 122, and cysteine 126. 2 residues coordinate L-glutamate: tyrosine 181 and arginine 199. The 'KMSKS' region motif lies at 237–241 (KLSKQ). Lysine 240 serves as a coordination point for ATP.

The protein belongs to the class-I aminoacyl-tRNA synthetase family. GluQ subfamily. The cofactor is Zn(2+).

Functionally, catalyzes the tRNA-independent activation of glutamate in presence of ATP and the subsequent transfer of glutamate onto a tRNA(Asp). Glutamate is transferred on the 2-amino-5-(4,5-dihydroxy-2-cyclopenten-1-yl) moiety of the queuosine in the wobble position of the QUC anticodon. This Synechococcus sp. (strain ATCC 27144 / PCC 6301 / SAUG 1402/1) (Anacystis nidulans) protein is Glutamyl-Q tRNA(Asp) synthetase.